Consider the following 875-residue polypeptide: Serine/threonine-protein kinase D2 (875 aa).

Over residues 1–12 (MAAAPSHPAGLP) the composition is skewed to low complexity. The interval 1–35 (MAAAPSHPAGLPGSPGPGSPPPPGGLDLQSPPPLL) is disordered. Positions 14–35 (SPGPGSPPPPGGLDLQSPPPLL) are enriched in pro residues. Ser-30 carries the post-translational modification Phosphoserine. Phosphotyrosine is present on Tyr-87. Residues 138-188 (PHALTVHSYRAPAFCDHCGEMLFGLVRQGLKCDGCGLNYHKRCAFSIPNNC) form a Phorbol-ester/DAG-type 1 zinc finger. Phosphoserine occurs at positions 197, 198, 200, 203, 206, 211, 212, and 214. Residues 224–247 (RSTTDLLPRRPPSSSSSSSSSSFY) form a disordered region. Over residues 236–245 (SSSSSSSSSS) the composition is skewed to low complexity. Ser-244 carries the post-translational modification Phosphoserine; by CSNK1D and CSNK1E. A Phosphoserine modification is found at Ser-245. Residues 265 to 315 (PHTFLIHSYTRPTVCQACKKLLKGLFRQGLQCKDCKFNCHKRCATRVPNDC) form a Phorbol-ester/DAG-type 2 zinc finger. A disordered region spans residues 332–374 (DYSEADKSSISDELEDSGVIPGSHSESALHASEEEEGEGHKAQ). Residues 398-510 (TTLREGWVVH…WETAIRQALM (113 aa)) enclose the PH domain. Phosphotyrosine is present on Tyr-408. Position 439 is a phosphotyrosine; by ABL1 (Tyr-439). Position 519 is a phosphoserine (Ser-519). Residues 552–808 (IFPDEVLGSG…VDKSLSHPWL (257 aa)) enclose the Protein kinase domain. Residues 558–566 (LGSGQFGVV) and Lys-581 contribute to the ATP site. Asp-675 acts as the Proton acceptor in catalysis. Position 707 is a phosphoserine; by PKC (Ser-707). Ser-711 is subject to Phosphoserine; by autocatalysis. Residue Tyr-718 is modified to Phosphotyrosine; by ABL1. Positions 725 to 727 (LNQ) match the Important for ABL1-mediated Tyr-718 phosphorylation motif. Ser-873 carries the post-translational modification Phosphoserine; by autocatalysis.

Belongs to the protein kinase superfamily. CAMK Ser/Thr protein kinase family. PKD subfamily. In terms of assembly, interacts (via C-terminus) with LCK. Interacts (via N-terminus and zing-finger domain 1 and 2) with PRKCD in response to oxidative stress; the interaction is independent of PRKD2 tyrosine phosphorylation. Requires Mg(2+) as cofactor. Post-translationally, phosphorylation of Ser-873 correlates with the activation status of the kinase. Ser-707 is probably phosphorylated by PKC. Phosphorylation at Ser-244 by CSNK1D and CSNK1E promotes nuclear localization and substrate targeting. Phosphorylation at Ser-244, Ser-707 and Ser-711 is required for nuclear localization. Phosphorylated at Tyr-438 by ABL1 in response to oxidative stress. Phosphorylated at Tyr-718 by ABL1 specifically in response to oxidative stress; requires prior phosphorylation at Ser-707 or/and Ser-711.

The protein resides in the cytoplasm. The protein localises to the cell membrane. It localises to the golgi apparatus. It is found in the trans-Golgi network. The enzyme catalyses L-seryl-[protein] + ATP = O-phospho-L-seryl-[protein] + ADP + H(+). It catalyses the reaction L-threonyl-[protein] + ATP = O-phospho-L-threonyl-[protein] + ADP + H(+). Its activity is regulated as follows. Activated by DAG and phorbol esters. Phorbol-ester/DAG-type domains bind DAG, mediating translocation to membranes. Autophosphorylation of Ser-711 and phosphorylation of Ser-707 by PKC relieves auto-inhibition by the PH domain. Catalytic activity is further increased by phosphorylation at Tyr-718 in response to oxidative stress. Serine/threonine-protein kinase that converts transient diacylglycerol (DAG) signals into prolonged physiological effects downstream of PKC, and is involved in the regulation of cell proliferation via MAPK1/3 (ERK1/2) signaling, oxidative stress-induced NF-kappa-B activation, inhibition of HDAC7 transcriptional repression, signaling downstream of T-cell antigen receptor (TCR) and cytokine production, and plays a role in Golgi membrane trafficking, angiogenesis, secretory granule release and cell adhesion. May potentiate mitogenesis induced by the neuropeptide bombesin by mediating an increase in the duration of MAPK1/3 (ERK1/2) signaling, which leads to accumulation of immediate-early gene products including FOS that stimulate cell cycle progression. In response to oxidative stress, is phosphorylated at Tyr-438 and Tyr-718 by ABL1, which leads to the activation of PRKD2 without increasing its catalytic activity, and mediates activation of NF-kappa-B. In response to the activation of the gastrin receptor CCKBR, is phosphorylated at Ser-244 by CSNK1D and CSNK1E, translocates to the nucleus, phosphorylates HDAC7, leading to nuclear export of HDAC7 and inhibition of HDAC7 transcriptional repression of NR4A1/NUR77. Upon TCR stimulation, is activated independently of ZAP70, translocates from the cytoplasm to the nucleus and is required for interleukin-2 (IL2) promoter up-regulation. During adaptive immune responses, is required in peripheral T-lymphocytes for the production of the effector cytokines IL2 and IFNG after TCR engagement and for optimal induction of antibody responses to antigens. In epithelial cells stimulated with lysophosphatidic acid (LPA), is activated through a PKC-dependent pathway and mediates LPA-stimulated interleukin-8 (IL8) secretion via a NF-kappa-B-dependent pathway. During TCR-induced T-cell activation, interacts with and is activated by the tyrosine kinase LCK, which results in the activation of the NFAT transcription factors. In the trans-Golgi network (TGN), regulates the fission of transport vesicles that are on their way to the plasma membrane and in polarized cells is involved in the transport of proteins from the TGN to the basolateral membrane. Plays an important role in endothelial cell proliferation and migration prior to angiogenesis, partly through modulation of the expression of KDR/VEGFR2 and FGFR1, two key growth factor receptors involved in angiogenesis. In secretory pathway, is required for the release of chromogranin-A (CHGA)-containing secretory granules from the TGN. Downstream of PRKCA, plays important roles in angiotensin-2-induced monocyte adhesion to endothelial cells. The sequence is that of Serine/threonine-protein kinase D2 (Prkd2) from Mus musculus (Mouse).